A 413-amino-acid polypeptide reads, in one-letter code: Serine hydroxymethyltransferase (413 aa).

(6S)-5,6,7,8-tetrahydrofolate-binding positions include L120 and 124–126 (GHL). K228 is subject to N6-(pyridoxal phosphate)lysine.

This sequence belongs to the SHMT family. In terms of assembly, homodimer. It depends on pyridoxal 5'-phosphate as a cofactor.

Its subcellular location is the cytoplasm. It carries out the reaction (6R)-5,10-methylene-5,6,7,8-tetrahydrofolate + glycine + H2O = (6S)-5,6,7,8-tetrahydrofolate + L-serine. Its pathway is one-carbon metabolism; tetrahydrofolate interconversion. The protein operates within amino-acid biosynthesis; glycine biosynthesis; glycine from L-serine: step 1/1. Functionally, catalyzes the reversible interconversion of serine and glycine with tetrahydrofolate (THF) serving as the one-carbon carrier. This reaction serves as the major source of one-carbon groups required for the biosynthesis of purines, thymidylate, methionine, and other important biomolecules. Also exhibits THF-independent aldolase activity toward beta-hydroxyamino acids, producing glycine and aldehydes, via a retro-aldol mechanism. The protein is Serine hydroxymethyltransferase of Agathobacter rectalis (strain ATCC 33656 / DSM 3377 / JCM 17463 / KCTC 5835 / VPI 0990) (Eubacterium rectale).